The chain runs to 517 residues: MKRFRIRSVDFRQLVNFFSFMRWECSSSATVWVRFNMTIRIINRQSRFCCKSFLSARLYSSSEQVRDVADVAKNISKVLMSSPQLVLDSALDQSGLRVSQEVVEDVLNRFRNAGLLTYRFFQWSEKQRHYEHSVRAYHMMIESTAKIRQYKLMWDLINAMRKKKMLNVETFCIVMRKYARAQKVDEAIYAFNVMEKYDLPPNLVAFNGLLSALCKSKNVRKAQEVFENMRDRFTPDSKTYSILLEGWGKEPNLPKAREVFREMIDAGCHPDIVTYSIMVDILCKAGRVDEALGIVRSMDPSICKPTTFIYSVLVHTYGTENRLEEAVDTFLEMERSGMKADVAVFNSLIGAFCKANRMKNVYRVLKEMKSKGVTPNSKSCNIILRHLIERGEKDEAFDVFRKMIKVCEPDADTYTMVIKMFCEKKEMETADKVWKYMRKKGVFPSMHTFSVLINGLCEERTTQKACVLLEEMIEMGIRPSGVTFGRLRQLLIKEEREDVLKFLNEKMNVLVNEPLCD.

The transit peptide at 1–59 directs the protein to the mitochondrion; sequence MKRFRIRSVDFRQLVNFFSFMRWECSSSATVWVRFNMTIRIINRQSRFCCKSFLSARLY. PPR repeat units lie at residues 133-163, 167-201, 202-232, 236-270, 271-305, 306-340, 341-375, 376-406, 410-444, and 445-479; these read SVRA…MRKK, NVET…DLPP, NLVA…MRDR, DSKT…GCHP, DIVT…ICKP, TTFI…GMKA, DVAV…GVTP, NSKS…MIKV, DADT…GVFP, and SMHT…GIRP.

Belongs to the PPR family. P subfamily.

The protein localises to the mitochondrion. The protein is Pentatricopeptide repeat-containing protein At1g77360, mitochondrial of Arabidopsis thaliana (Mouse-ear cress).